Here is a 295-residue protein sequence, read N- to C-terminus: Ribosomal RNA small subunit methyltransferase A (295 aa).

S-adenosyl-L-methionine-binding residues include Asn-29, Leu-31, Gly-56, Glu-77, Asp-102, and Asn-128.

This sequence belongs to the class I-like SAM-binding methyltransferase superfamily. rRNA adenine N(6)-methyltransferase family. RsmA subfamily.

Its subcellular location is the cytoplasm. The enzyme catalyses adenosine(1518)/adenosine(1519) in 16S rRNA + 4 S-adenosyl-L-methionine = N(6)-dimethyladenosine(1518)/N(6)-dimethyladenosine(1519) in 16S rRNA + 4 S-adenosyl-L-homocysteine + 4 H(+). Specifically dimethylates two adjacent adenosines (A1518 and A1519) in the loop of a conserved hairpin near the 3'-end of 16S rRNA in the 30S particle. May play a critical role in biogenesis of 30S subunits. In Listeria innocua serovar 6a (strain ATCC BAA-680 / CLIP 11262), this protein is Ribosomal RNA small subunit methyltransferase A.